We begin with the raw amino-acid sequence, 99 residues long: C-C motif chemokine 8 (99 aa).

Positions 1–23 are cleaved as a signal peptide; it reads MKVSAGILCLLLVAATFGTQVLA. Position 24 is a pyrrolidone carboxylic acid (Gln24). Disulfide bonds link Cys34/Cys59 and Cys35/Cys75.

Belongs to the intercrine beta (chemokine CC) family. In terms of assembly, monomer or homodimer; in equilibrium.

It is found in the secreted. Functionally, chemotactic factor that attracts monocytes. This protein can bind heparin. This chain is C-C motif chemokine 8 (CCL8), found in Bos taurus (Bovine).